Consider the following 871-residue polypeptide: Protein translocase subunit SecA (871 aa).

ATP-binding positions include Gln80, 98-102 (GEGKT), and Asp537.

It belongs to the SecA family. As to quaternary structure, monomer and homodimer. Part of the essential Sec protein translocation apparatus which comprises SecA, SecYEG and auxiliary proteins SecDF. Other proteins may also be involved.

The protein resides in the cell inner membrane. It localises to the cytoplasm. It catalyses the reaction ATP + H2O + cellular proteinSide 1 = ADP + phosphate + cellular proteinSide 2.. Its function is as follows. Part of the Sec protein translocase complex. Interacts with the SecYEG preprotein conducting channel. Has a central role in coupling the hydrolysis of ATP to the transfer of proteins into and across the cell membrane, serving as an ATP-driven molecular motor driving the stepwise translocation of polypeptide chains across the membrane. This is Protein translocase subunit SecA from Thermotoga sp. (strain RQ2).